The sequence spans 403 residues: Decapping and exoribonuclease protein 1 (403 aa).

E223 contributes to the a divalent metal cation binding site. E260 contacts substrate. D262, E273, and I274 together coordinate a divalent metal cation. K275 and Q297 together coordinate substrate.

It belongs to the DXO/Dom3Z family. A divalent metal cation is required as a cofactor.

The protein localises to the cytoplasm. The catalysed reaction is a 5'-end NAD(+)-phospho-ribonucleoside in mRNA + H2O = a 5'-end phospho-ribonucleoside in mRNA + NAD(+) + H(+). It catalyses the reaction a 5'-end (N(7)-methyl 5'-triphosphoguanosine)-ribonucleoside-ribonucleotide in mRNA + H2O = a (N(7)-methyl 5'-triphosphoguanosine)-nucleoside + a 5'-end phospho-ribonucleoside in mRNA + H(+). Functionally, decapping enzyme for NAD-capped RNAs: specifically hydrolyzes the nicotinamide adenine dinucleotide (NAD) cap from a subset of RNAs by removing the entire NAD moiety from the 5'-end of an NAD-capped RNA. The NAD-cap is present at the 5'-end of some RNAs and snoRNAs. In contrast to the canonical 5'-end N7 methylguanosine (m7G) cap, the NAD cap promotes mRNA decay. Also acts as a non-canonical decapping enzyme that removes the entire cap structure of m7G capped or incompletely capped RNAs and mediates their subsequent degradation. Has decapping and 5'-3' exonuclease activities. Has decapping activity toward incomplete 5'-end cap mRNAs such as unmethylated 5'-end-capped RNA to release GpppN and 5'-end monophosphate RNA. The 5'-end monophosphate RNA is then degraded by the 5'-3' exoribonuclease activity, enabling this enzyme to decap and degrade incompletely capped mRNAs. The polypeptide is Decapping and exoribonuclease protein 1 (Kluyveromyces lactis (strain ATCC 8585 / CBS 2359 / DSM 70799 / NBRC 1267 / NRRL Y-1140 / WM37) (Yeast)).